A 523-amino-acid chain; its full sequence is Nondiscriminating glutamyl-tRNA synthetase EARS2, mitochondrial (523 aa).

A mitochondrion-targeting transit peptide spans 1–41 (MAALLRRLLQRERPSAASGRPVGRREANLGTDAGVAVRVRF). 40 to 42 (RFA) contributes to the L-glutamate binding site. Residues 45–53 (PTGFLHLGG) carry the 'HIGH' region motif. Histidine 50 serves as a coordination point for ATP. L-glutamate contacts are provided by residues glutamate 76, 228 to 232 (YHLAC), and arginine 246. Glutamate 249 contributes to the ATP binding site. N6-succinyllysine is present on lysine 256. 284-288 (KLSKR) lines the ATP pocket. The 'KMSKS' region motif lies at 284 to 288 (KLSKR). Lysine 486 carries the post-translational modification N6-acetyllysine.

This sequence belongs to the class-I aminoacyl-tRNA synthetase family. Glutamate--tRNA ligase type 1 subfamily.

It is found in the mitochondrion matrix. It carries out the reaction tRNA(Glx) + L-glutamate + ATP = L-glutamyl-tRNA(Glx) + AMP + diphosphate. The enzyme catalyses tRNA(Glu) + L-glutamate + ATP = L-glutamyl-tRNA(Glu) + AMP + diphosphate. The catalysed reaction is tRNA(Gln) + L-glutamate + ATP = L-glutamyl-tRNA(Gln) + AMP + diphosphate. In terms of biological role, non-discriminating glutamyl-tRNA synthetase that catalyzes aminoacylation of both mitochondrial tRNA(Glu) and tRNA(Gln) and participates in RNA aminoacylation for mitochondrial protein translation. Attachs glutamate to tRNA(Glu) or tRNA(Gln) in a two-step reaction: glutamate is first activated by ATP to form Glu-AMP and then transferred to the acceptor end of tRNA(Glu) or tRNA(Gln). In vitro, cytoplasmic tRNA(Gln) is slightly glutamylated, but with low activity. The sequence is that of Nondiscriminating glutamyl-tRNA synthetase EARS2, mitochondrial from Homo sapiens (Human).